A 195-amino-acid polypeptide reads, in one-letter code: MELNTHNAEILLSAANKSHYPQDELPEIALAGRSNVGKSSFINTMLNRKNLARTSGKPGKTQLLNFFNIDDKMRFVDVPGYGYARVSKKEREKWGCMIEEYLTTRENLRAVVSLVDLRHAPSADDVQMYEFLKYYEIPVIIVATKADKIPRGKWNKHESAIKKKLNFDPSDDFILFSSVSKAGMDEAWDAILEKL.

The EngB-type G domain maps to 24–195 (ELPEIALAGR…EAWDAILEKL (172 aa)). Residues 32–39 (GRSNVGKS), 59–63 (GKTQL), 77–80 (DVPG), 144–147 (TKAD), and 176–178 (FSS) each bind GTP. Residues serine 39 and threonine 61 each coordinate Mg(2+).

Belongs to the TRAFAC class TrmE-Era-EngA-EngB-Septin-like GTPase superfamily. EngB GTPase family. Requires Mg(2+) as cofactor.

In terms of biological role, necessary for normal cell division and for the maintenance of normal septation. The protein is Probable GTP-binding protein EngB of Streptococcus pneumoniae (strain JJA).